The sequence spans 348 residues: Probable dual-specificity RNA methyltransferase RlmN (348 aa).

The active-site Proton acceptor is the Glu-89. Residues 95–328 form the Radical SAM core domain; that stretch reads HKNRNTVCVS…VTLRISYGSK (234 aa). Residues Cys-102 and Cys-333 are joined by a disulfide bond. Cys-109, Cys-113, and Cys-116 together coordinate [4Fe-4S] cluster. Residues 159–160, Ser-191, 214–216, and Asn-290 each bind S-adenosyl-L-methionine; these read GE and SLH. The S-methylcysteine intermediate role is filled by Cys-333.

It belongs to the radical SAM superfamily. RlmN family. It depends on [4Fe-4S] cluster as a cofactor.

It localises to the cytoplasm. The enzyme catalyses adenosine(2503) in 23S rRNA + 2 reduced [2Fe-2S]-[ferredoxin] + 2 S-adenosyl-L-methionine = 2-methyladenosine(2503) in 23S rRNA + 5'-deoxyadenosine + L-methionine + 2 oxidized [2Fe-2S]-[ferredoxin] + S-adenosyl-L-homocysteine. It carries out the reaction adenosine(37) in tRNA + 2 reduced [2Fe-2S]-[ferredoxin] + 2 S-adenosyl-L-methionine = 2-methyladenosine(37) in tRNA + 5'-deoxyadenosine + L-methionine + 2 oxidized [2Fe-2S]-[ferredoxin] + S-adenosyl-L-homocysteine. Functionally, specifically methylates position 2 of adenine 2503 in 23S rRNA and position 2 of adenine 37 in tRNAs. The protein is Probable dual-specificity RNA methyltransferase RlmN of Dictyoglomus turgidum (strain DSM 6724 / Z-1310).